Here is a 406-residue protein sequence, read N- to C-terminus: Tyrosine--tRNA ligase (406 aa).

Tyr-35 serves as a coordination point for L-tyrosine. A 'HIGH' region motif is present at residues 40 to 49; that stretch reads PTADSLHVGH. Residues Tyr-168 and Gln-172 each contribute to the L-tyrosine site. The 'KMSKS' region motif lies at 228 to 232; the sequence is KMGKT. An ATP-binding site is contributed by Lys-231. The region spanning 340–404 is the S4 RNA-binding domain; sequence AELLDILVEA…RGKKNYNKIV (65 aa).

This sequence belongs to the class-I aminoacyl-tRNA synthetase family. TyrS type 1 subfamily. In terms of assembly, homodimer.

Its subcellular location is the cytoplasm. It carries out the reaction tRNA(Tyr) + L-tyrosine + ATP = L-tyrosyl-tRNA(Tyr) + AMP + diphosphate + H(+). Functionally, catalyzes the attachment of tyrosine to tRNA(Tyr) in a two-step reaction: tyrosine is first activated by ATP to form Tyr-AMP and then transferred to the acceptor end of tRNA(Tyr). This Clostridium perfringens (strain 13 / Type A) protein is Tyrosine--tRNA ligase.